A 326-amino-acid chain; its full sequence is GTPase IMAP family member 5 (326 aa).

Over 1-297 the chain is Cytoplasmic; it reads MEDHGFEELS…MLCRVTSCLD (297 aa). An AIG1-type G domain is found at 42–245; that stretch reads SGLLRILLVG…HSNDLFVYTQ (204 aa). GTP is bound by residues 51–59, S72, 169–171, and N206; these read GKSGCGKSA and HKE. The helical; Anchor for type IV membrane protein transmembrane segment at 298–318 threads the bilayer; it reads WHIAVSVLLIVLGLTLLITLI. Residues 319 to 326 are Lumenal-facing; the sequence is NMYIGRWK.

Belongs to the TRAFAC class TrmE-Era-EngA-EngB-Septin-like GTPase superfamily. AIG1/Toc34/Toc159-like paraseptin GTPase family. IAN subfamily. Interacts with BAD, BAK1, BAX, BCL2, BCL2L1/Bcl-xL and BCL2L11/BimEL. The interaction with BAX is increased, when cells initiate apoptosis upon IL2 withdrawal. Forms a complex with BCL2L1 or MCL1 and HSPA8/HSC70; the interaction between HSPA8 and BCL2L1 or MCL1 is impaired in the absence of GIMAP5. May interact (via N-terminus) with microtubules. As to expression, primarily expressed in spleen, heart, lung and intestine and, at lower levels, in kidney, stomach and muscle. Expressed in thymus and lymph nodes (at protein level). In the spleen, expressed in periarteriolar lymphatic sheets. Isoform 2: Expressed at higher levels in T lymphocytes compared to isoform 1.

It localises to the lysosome membrane. It is found in the endosome. The protein resides in the multivesicular body membrane. Its subcellular location is the endosome membrane. Functionally, required for mitochondrial integrity and T-cell survival. May contribute to T-cell quiescence. In terms of biological role, plays a role in T lymphocyte development and the optimal generation of CD4/CD8 double-positive thymocytes. Inhibitor of GSK3A, possibly by sequestering GSK3A in cytoplasmic vesicles and impairing its translocation to the nucleus. Consequently, impairs GSK3A-dependent transcriptional program and regulation of the DNA damage response occurring during T cells proliferation. Required for the survival of peripheral T cells, natural killer (NK) and NK T-cell development and the maintenance of normal liver function. Promotes the survival of quiescent T-cells. May regulate Ca(2+) homeostasis by modulating lysosomal Ca(2+) stores, preventing its accumulation in the absence of T cell activation. May play a role in mitochondrial DNA segregation in hematopoietic tissues. Is a regulator of liver endothelial cell homeostasis. The sequence is that of GTPase IMAP family member 5 (Gimap5) from Rattus norvegicus (Rat).